The primary structure comprises 78 residues: Acyl carrier protein (78 aa).

Positions 2–77 constitute a Carrier domain; the sequence is STIEERVKKI…AAIDYINGHQ (76 aa). S37 carries the post-translational modification O-(pantetheine 4'-phosphoryl)serine.

This sequence belongs to the acyl carrier protein (ACP) family. In terms of processing, 4'-phosphopantetheine is transferred from CoA to a specific serine of apo-ACP by AcpS. This modification is essential for activity because fatty acids are bound in thioester linkage to the sulfhydryl of the prosthetic group.

The protein resides in the cytoplasm. It functions in the pathway lipid metabolism; fatty acid biosynthesis. Its function is as follows. Carrier of the growing fatty acid chain in fatty acid biosynthesis. This is Acyl carrier protein from Shigella flexneri.